The primary structure comprises 121 residues: Trypsin/alpha-amylase inhibitor CMX1/CMX3 (121 aa).

Residues 1-24 (MAFKHQLILSTAILLAVLAAASAS) form the signal peptide.

It belongs to the protease inhibitor I6 (cereal trypsin/alpha-amylase inhibitor) family.

The protein localises to the secreted. The protein is Trypsin/alpha-amylase inhibitor CMX1/CMX3 of Triticum aestivum (Wheat).